Reading from the N-terminus, the 123-residue chain is Large ribosomal subunit protein bL12 (123 aa).

This sequence belongs to the bacterial ribosomal protein bL12 family. Homodimer. Part of the ribosomal stalk of the 50S ribosomal subunit. Forms a multimeric L10(L12)X complex, where L10 forms an elongated spine to which 2 to 4 L12 dimers bind in a sequential fashion. Binds GTP-bound translation factors.

In terms of biological role, forms part of the ribosomal stalk which helps the ribosome interact with GTP-bound translation factors. Is thus essential for accurate translation. The sequence is that of Large ribosomal subunit protein bL12 from Dehalococcoides mccartyi (strain ATCC BAA-2100 / JCM 16839 / KCTC 5957 / BAV1).